We begin with the raw amino-acid sequence, 313 residues long: Cytosolic Fe-S cluster assembly factor NUBP1 homolog (313 aa).

Residues 1 to 25 (MSDVPEDANAGCPGTGSAGAGKASG) are disordered. 4 residues coordinate [4Fe-4S] cluster: Cys-12, Cys-26, Cys-29, and Cys-35. 66 to 73 (GKGGVGKS) provides a ligand contact to ATP. [4Fe-4S] cluster-binding residues include Cys-240 and Cys-243.

It belongs to the Mrp/NBP35 ATP-binding proteins family. NUBP1/NBP35 subfamily. In terms of assembly, heterotetramer of 2 NUBP1 and 2 NUBP2 chains. [4Fe-4S] cluster serves as cofactor.

The protein resides in the cytoplasm. The protein localises to the cell projection. Functionally, component of the cytosolic iron-sulfur (Fe/S) protein assembly (CIA) machinery. Required for maturation of extramitochondrial Fe-S proteins. The NUBP1-NUBP2 heterotetramer forms a Fe-S scaffold complex, mediating the de novo assembly of an Fe-S cluster and its transfer to target apoproteins. Regulates cilium formation and structure. The sequence is that of Cytosolic Fe-S cluster assembly factor NUBP1 homolog from Caenorhabditis briggsae.